We begin with the raw amino-acid sequence, 250 residues long: 1-(5-phosphoribosyl)-5-[(5-phosphoribosylamino)methylideneamino] imidazole-4-carboxamide isomerase (250 aa).

Aspartate 8 serves as the catalytic Proton acceptor. The active-site Proton donor is aspartate 131.

The protein belongs to the HisA/HisF family.

The protein localises to the cytoplasm. The enzyme catalyses 1-(5-phospho-beta-D-ribosyl)-5-[(5-phospho-beta-D-ribosylamino)methylideneamino]imidazole-4-carboxamide = 5-[(5-phospho-1-deoxy-D-ribulos-1-ylimino)methylamino]-1-(5-phospho-beta-D-ribosyl)imidazole-4-carboxamide. It participates in amino-acid biosynthesis; L-histidine biosynthesis; L-histidine from 5-phospho-alpha-D-ribose 1-diphosphate: step 4/9. The chain is 1-(5-phosphoribosyl)-5-[(5-phosphoribosylamino)methylideneamino] imidazole-4-carboxamide isomerase from Paraburkholderia phymatum (strain DSM 17167 / CIP 108236 / LMG 21445 / STM815) (Burkholderia phymatum).